A 685-amino-acid polypeptide reads, in one-letter code: MGSSATATTTGESTRQQPGLACEECRRRKARCDRVRPKCGICADSGRNCVVLDKRSQRGPKKGQLKDLRSRLMLLEQRLVGQNDAPSLPQERDSLGCPTPSEKVSPEGDLVSSRASTDIGLDTCMGSTAGAFALFGSTSGSDKMPPLTPDLSTASTANSMAACICKGWQTEPAMFSTSPFPQIPLTPQSTTAPSRMPSISLAAADPIMPDVRVHPFAPMVHKRRYYAWASDPNASPARTALRSAMRTIASAMSPQFCDIGHVMYASTRRMLETQDACPETGLPWMTRLKPPHEQRKMHHERIQAWLLLAYYDVLRKSEHQAFITARRAFRLLRLSGLCEMDIDAYSGRQGDVATCTPPAETTWNMQMCSSENGADEAVLQQDWISVEERRRTVWSAFLLDRLSTMVNDQPTMLMEEAVTKPHACTFSWYFSADLPISNQFYTRLPMSEAEFQSGTQEPVSQMGFLIEATDGIKASNSIQPLPPFAHCVVVANLFARCMTHCKMAMQSPPMSAPEAHDFWIRHQWLASAAANACESTETRCDPMLVFTRILAYSASLSLCSTANATSWQTLDHHLMAMACKPAAHQAASEVVRIIKTAPRIAFFKMHPFFPNAIALVTSFLNADVPYLPSTRGGNAMDAIQERQDAVNELLAALRRSSQVNNLAAELLCKLELDIGQAASDGSIYG.

Residues 1–14 (MGSSATATTTGEST) show a composition bias toward low complexity. The interval 1 to 20 (MGSSATATTTGESTRQQPGL) is disordered. Residues 22–49 (CEECRRRKARCDRVRPKCGICADSGRNC) constitute a DNA-binding region (zn(2)-C6 fungal-type). Positions 81 to 112 (GQNDAPSLPQERDSLGCPTPSEKVSPEGDLVS) are disordered.

The protein resides in the nucleus. In terms of biological role, transcription factor that acts as the main regulator of the gene cluster that mediates the biosynthesis of sorbicillinoids, a diverse group of yellow secondary metabolites that restrict growth of competing pathogenic fungi but not of bacteria. In Hypocrea jecorina (strain QM6a) (Trichoderma reesei), this protein is Sorbicillinoid biosynthetic cluster transcription factor sor4.